The primary structure comprises 147 residues: MALKRIQKELQDLGRDPPAQCSAGPVGDDLFHWQATIMGPPESPYQGGVFFLTIHFPTDYPFKPPKVAFTTRIYHPNINSNGSICLDILRSQWSPALTISKVLLSICSLLCDPNPDDPLVPEIARIYKTDRERYNQLAREWTQKYAM.

A UBC core domain is found at 1-147 (MALKRIQKEL…AREWTQKYAM (147 aa)). Cysteine 85 (glycyl thioester intermediate) is an active-site residue.

This sequence belongs to the ubiquitin-conjugating enzyme family. Interacts with the brc-1-brd-1 heterodimer following ionizing irradiation. Expressed in the nervous system.

It is found in the nucleus. The protein resides in the chromosome. Its subcellular location is the cytoplasm. It catalyses the reaction S-ubiquitinyl-[E1 ubiquitin-activating enzyme]-L-cysteine + [E2 ubiquitin-conjugating enzyme]-L-cysteine = [E1 ubiquitin-activating enzyme]-L-cysteine + S-ubiquitinyl-[E2 ubiquitin-conjugating enzyme]-L-cysteine.. Its pathway is protein modification; protein ubiquitination. In terms of biological role, catalyzes the covalent attachment of ubiquitin to other proteins. Mediates the selective degradation of short-lived and abnormal proteins. Plays a role in the DNA damage response. In particular, in response to ionizing radiation, associates with the E3 ubiquitin-protein ligase brc-1-brd-1 heterodimer on chromatin to activate E3-ubiquitin ligase activity of the heterodimer, and thus its DNA damage repair mechanisms. Required, cell autonomously, for death of the linker cell, a male-specific cell which guides the elongation of the gonad; perhaps acting as part of the ubiquitin proteasome system (UPS) and modulated by heat shock transcription factor hsf-1. The chain is Ubiquitin-conjugating enzyme E2 2 from Caenorhabditis elegans.